Reading from the N-terminus, the 160-residue chain is Cytochrome b6-f complex subunit 4 (160 aa).

3 consecutive transmembrane segments (helical) span residues 36-56 (LLYV…GLAI), 95-115 (LLGI…PFIE), and 131-151 (AIFL…TFPI).

Belongs to the cytochrome b family. PetD subfamily. The 4 large subunits of the cytochrome b6-f complex are cytochrome b6, subunit IV (17 kDa polypeptide, PetD), cytochrome f and the Rieske protein, while the 4 small subunits are PetG, PetL, PetM and PetN. The complex functions as a dimer.

The protein localises to the cellular thylakoid membrane. Its function is as follows. Component of the cytochrome b6-f complex, which mediates electron transfer between photosystem II (PSII) and photosystem I (PSI), cyclic electron flow around PSI, and state transitions. The sequence is that of Cytochrome b6-f complex subunit 4 from Microcystis aeruginosa (strain NIES-843 / IAM M-2473).